Reading from the N-terminus, the 261-residue chain is WW domain-binding protein 2 (261 aa).

The region spanning 1–84 (MALNKNHSEG…YLMKDCEIKQ (84 aa)) is the GRAM domain. Phosphotyrosine is present on Tyr192. Residues 196 to 200 (PPPPY) carry the PPxY motif 1 motif. The span at 196 to 209 (PPPPYPGPMEPPVS) shows a compositional bias: pro residues. Positions 196 to 261 (PPPPYPGPME…YYPPEDKKTQ (66 aa)) are disordered. Low complexity predominate over residues 210 to 230 (GPSAPATPAAEAKAAEAAASA). Residue Tyr231 is modified to Phosphotyrosine. Residues 245–254 (SQPPPPPYYP) are compositionally biased toward pro residues. The PPxY motif 2 signature appears at 248–252 (PPPPY).

As to quaternary structure, binds to the WW domain of YAP1, WWP1 and WWP2. Interacts with NEDD4. Interacts with ESR1 and UBE3A. In terms of processing, phosphorylated in repsonse to EGF as well as estrogen and progesterone hormones. Tyr-192 and Tyr-231 are phosphorylated by YES and SRC inducing nuclear translocation. In terms of tissue distribution, expressed in the ear and the eye. Isoform 1 is expressed in brain, inner ear and organ of Corti. Isoform 2 is only detected in brain.

It localises to the cytoplasm. The protein localises to the nucleus. Its function is as follows. Acts as a transcriptional coactivator of estrogen and progesterone receptors (ESR1 and PGR) upon hormone activation. In presence of estrogen, binds to ESR1-responsive promoters. Synergizes with YAP1 to enhance PGR activity. Modulates expression of post-synaptic scaffolding proteins via regulation of ESR1, ESR2 and PGR. This chain is WW domain-binding protein 2 (Wbp2), found in Mus musculus (Mouse).